Here is a 443-residue protein sequence, read N- to C-terminus: Thymidine phosphorylase (443 aa).

The protein belongs to the thymidine/pyrimidine-nucleoside phosphorylase family. In terms of assembly, homodimer.

It catalyses the reaction thymidine + phosphate = 2-deoxy-alpha-D-ribose 1-phosphate + thymine. The protein operates within pyrimidine metabolism; dTMP biosynthesis via salvage pathway; dTMP from thymine: step 1/2. Functionally, the enzymes which catalyze the reversible phosphorolysis of pyrimidine nucleosides are involved in the degradation of these compounds and in their utilization as carbon and energy sources, or in the rescue of pyrimidine bases for nucleotide synthesis. The chain is Thymidine phosphorylase from Shewanella sediminis (strain HAW-EB3).